The following is a 553-amino-acid chain: Arginine--tRNA ligase (553 aa).

The 'HIGH' region signature appears at 132–140; sequence PTGDLHIGH.

This sequence belongs to the class-I aminoacyl-tRNA synthetase family. As to quaternary structure, monomer.

It localises to the cytoplasm. The catalysed reaction is tRNA(Arg) + L-arginine + ATP = L-arginyl-tRNA(Arg) + AMP + diphosphate. This is Arginine--tRNA ligase from Staphylococcus aureus (strain Mu50 / ATCC 700699).